The following is a 361-amino-acid chain: Protein RecA (361 aa).

77-84 contributes to the ATP binding site; it reads GPESSGKT.

Belongs to the RecA family.

It is found in the cytoplasm. Its function is as follows. Can catalyze the hydrolysis of ATP in the presence of single-stranded DNA, the ATP-dependent uptake of single-stranded DNA by duplex DNA, and the ATP-dependent hybridization of homologous single-stranded DNAs. It interacts with LexA causing its activation and leading to its autocatalytic cleavage. The chain is Protein RecA from Brucella anthropi (strain ATCC 49188 / DSM 6882 / CCUG 24695 / JCM 21032 / LMG 3331 / NBRC 15819 / NCTC 12168 / Alc 37) (Ochrobactrum anthropi).